Reading from the N-terminus, the 143-residue chain is UPF0251 protein Rru_A1194 (143 aa).

The interval 100–143 (LDGSACPNRRQRRGPCARRGAAGALARQTGDEPPSSPTDNEKDD) is disordered. Residues 116–126 (ARRGAAGALAR) are compositionally biased toward low complexity.

It belongs to the UPF0251 family.

This is UPF0251 protein Rru_A1194 from Rhodospirillum rubrum (strain ATCC 11170 / ATH 1.1.1 / DSM 467 / LMG 4362 / NCIMB 8255 / S1).